The sequence spans 344 residues: MARDLIGPALPPGFKARGTAEDEERDPSPGPALPPNYKSSSSDSSDSDEDSSSLYEEGNQESEEDDTGPTARKQRKNQDDDNDDDDDDDDDDGFFGPALPPGFKKQDDSPPRPIIGPALPPGFIKSTQKSDKGRDDPGQQETDSSEDEDIIGPMPAKGPVNYNVTTEFEKRAQRMKEKLTKGDDDSSKPIVRESWMTELPAEMKDFGLGPRTFKRRADDTSGDRSVWTDTPADRERKAKETQEARKSSSKKDEEHILSGRDKRLAEQVSSYNESKRSESLMDIHHKKLKSKAAEDKNKPQERIPFDRDKDLKVNRFDEAQKKALIKKSRELNTRFSHGKGNMFL.

Positions 1 to 309 (MARDLIGPAL…QERIPFDRDK (309 aa)) are disordered. Residue alanine 2 is modified to N-acetylalanine. The GPALPP motif 1 signature appears at 7 to 12 (GPALPP). Serine 28 is subject to Phosphoserine. The GPALPP motif 2 motif lies at 30 to 35 (GPALPP). Composition is skewed to acidic residues over residues 58-67 (GNQESEEDDT) and 80-93 (DDND…DDDG). The GPALPP motif 3 motif lies at 96-101 (GPALPP). The residue at position 109 (serine 109) is a Phosphoserine. The segment covering 111–120 (PRPIIGPALP) has biased composition (pro residues). The GPALPP motif 4 motif lies at 116 to 121 (GPALPP). Basic and acidic residues predominate over residues 128–137 (QKSDKGRDDP). Threonine 142 is modified (phosphothreonine). Serine 144 and serine 145 each carry phosphoserine. Basic and acidic residues-rich tracts occupy residues 167 to 191 (EFEK…KPIV), 231 to 265 (PADR…KRLA), 273 to 283 (ESKRSESLMDI), and 291 to 309 (KAAE…DRDK). Lysine 275 is covalently cross-linked (Glycyl lysine isopeptide (Lys-Gly) (interchain with G-Cter in SUMO2)). Lysine 312 participates in a covalent cross-link: Glycyl lysine isopeptide (Lys-Gly) (interchain with G-Cter in SUMO2).

The protein is GPALPP motifs-containing protein 1 (GPALPP1) of Pongo abelii (Sumatran orangutan).